We begin with the raw amino-acid sequence, 205 residues long: Polyamine-modulated factor 1 (205 aa).

Residues 1–28 (MAEASSVNVGSGCAEKGPEELSQEPARP) are disordered. Residues 140–190 (YLLQQRDALQRRVQRQEAENRQLADAVLAGRRQLEELQLQAQARQQAWQAL) are a coiled coil.

As to quaternary structure, component of the MIS12 complex composed of MIS12, DSN1, NSL1 and PMF1. Interacts with COPS7A. Interacts via its coiled-coil domain with the leucine-zipper domain of NFE2L2. The interaction with NFE2L2 is required for the transcriptional regulation of SSAT.

The protein resides in the nucleus. Its subcellular location is the chromosome. It localises to the centromere. It is found in the kinetochore. Its function is as follows. Part of the MIS12 complex which is required for normal chromosome alignment and segregation and kinetochore formation during mitosis. May act as a cotranscription partner of NFE2L2 involved in regulation of polyamine-induced transcription of SSAT. In Bos taurus (Bovine), this protein is Polyamine-modulated factor 1 (PMF1).